The sequence spans 192 residues: uncharacterized protein (192 aa).

The Nudix hydrolase domain occupies 29–160 (QRQAAVLVPI…PLDIERKQQR (132 aa)). The short motif at 67 to 89 (GAADKTDRSIIETALREAQEEVA) is the Nudix box element. Mg(2+) is bound by residues glutamate 83 and glutamate 87.

This sequence belongs to the Nudix hydrolase family. PCD1 subfamily. The cofactor is Mn(2+). Mg(2+) serves as cofactor.

In terms of biological role, probably mediates the hydrolysis of some nucleoside diphosphate derivatives. This is an uncharacterized protein from Pectobacterium atrosepticum (strain SCRI 1043 / ATCC BAA-672) (Erwinia carotovora subsp. atroseptica).